A 277-amino-acid polypeptide reads, in one-letter code: Methylamine utilization protein MauF (277 aa).

Transmembrane regions (helical) follow at residues 33–53 (IAVL…LASA), 59–79 (LWAV…WSPC), 111–131 (YGLG…IAGF), 132–152 (SGFG…YGAH), 179–199 (WVIG…YVQT), 205–225 (MTLA…VALF), and 257–277 (ALAD…LALI).

It is found in the cell membrane. Its pathway is one-carbon metabolism; methylamine degradation. This is Methylamine utilization protein MauF (mauF) from Paracoccus denitrificans.